The following is a 368-amino-acid chain: Quinolinate synthase (368 aa).

2 residues coordinate iminosuccinate: H46 and S63. Position 110 (C110) interacts with [4Fe-4S] cluster. Iminosuccinate contacts are provided by residues 141–143 (YVN) and S162. A [4Fe-4S] cluster-binding site is contributed by C230. Iminosuccinate contacts are provided by residues 256–258 (HPE) and T273. C320 contacts [4Fe-4S] cluster.

It belongs to the quinolinate synthase family. Type 3 subfamily. [4Fe-4S] cluster is required as a cofactor.

Its subcellular location is the cytoplasm. It catalyses the reaction iminosuccinate + dihydroxyacetone phosphate = quinolinate + phosphate + 2 H2O + H(+). It participates in cofactor biosynthesis; NAD(+) biosynthesis; quinolinate from iminoaspartate: step 1/1. In terms of biological role, catalyzes the condensation of iminoaspartate with dihydroxyacetone phosphate to form quinolinate. The polypeptide is Quinolinate synthase (Bacillus cereus (strain Q1)).